The chain runs to 165 residues: Large ribosomal subunit protein uL11 (165 aa).

The protein belongs to the universal ribosomal protein uL11 family. As to quaternary structure, component of the large ribosomal subunit. Mature ribosomes consist of a small (40S) and a large (60S) subunit. The 40S subunit contains about 32 different proteins and 1 molecule of RNA (18S). The 60S subunit contains 45 different proteins and 3 molecules of RNA (25S, 5.8S and 5S).

The protein localises to the cytoplasm. Component of the ribosome, a large ribonucleoprotein complex responsible for the synthesis of proteins in the cell. The small ribosomal subunit (SSU) binds messenger RNAs (mRNAs) and translates the encoded message by selecting cognate aminoacyl-transfer RNA (tRNA) molecules. The large subunit (LSU) contains the ribosomal catalytic site termed the peptidyl transferase center (PTC), which catalyzes the formation of peptide bonds, thereby polymerizing the amino acids delivered by tRNAs into a polypeptide chain. The nascent polypeptides leave the ribosome through a tunnel in the LSU and interact with protein factors that function in enzymatic processing, targeting, and the membrane insertion of nascent chains at the exit of the ribosomal tunnel. The sequence is that of Large ribosomal subunit protein uL11 (RPL12) from Candida albicans (strain SC5314 / ATCC MYA-2876) (Yeast).